A 157-amino-acid polypeptide reads, in one-letter code: MKVELCSFSGYKIYPGHGRRYARTDGKVFQFLNAKCESAFLSKRNPRQINWTVLYRRKHKKGQSEEIQKKRTRRAVKFQRAITGASLADIMAKRNQKPEVRKAQREQAIRAAKEAKKAKQASKKTAMAAAKAPTKAAPKQKIVKPVKVSAPRVGGKR.

A Glycyl lysine isopeptide (Lys-Gly) (interchain with G-Cter in SUMO2) cross-link involves residue lysine 2. ADP-ribosyl glutamic acid is present on glutamate 4. Position 27 is an N6-acetyllysine; alternate (lysine 27). Lysine 27 participates in a covalent cross-link: Glycyl lysine isopeptide (Lys-Gly) (interchain with G-Cter in SUMO2); alternate. Lysine 35 is covalently cross-linked (Glycyl lysine isopeptide (Lys-Gly) (interchain with G-Cter in SUMO2)). Lysine 77 bears the N6-acetyllysine mark. Threonine 83 carries the phosphothreonine modification. A Phosphoserine modification is found at serine 86. An N6-acetyllysine modification is found at lysine 93. A compositionally biased stretch (basic and acidic residues) spans 106-117 (EQAIRAAKEAKK). Residues 106–157 (EQAIRAAKEAKKAKQASKKTAMAAAKAPTKAAPKQKIVKPVKVSAPRVGGKR) are disordered. Residues 123–140 (KKTAMAAAKAPTKAAPKQ) show a composition bias toward low complexity. Lysine 131 carries the N6-succinyllysine modification. Lysine 147 participates in a covalent cross-link: Glycyl lysine isopeptide (Lys-Gly) (interchain with G-Cter in SUMO2). Serine 149 is subject to Phosphoserine.

This sequence belongs to the eukaryotic ribosomal protein eL24 family. In terms of assembly, component of the large ribosomal subunit. Mono-ADP-ribosylation at Glu-4 by PARP16 inhibits polysome assembly and mRNA loading, thereby inhibiting protein translation.

Its subcellular location is the cytoplasm. Its function is as follows. Component of the large ribosomal subunit. The ribosome is a large ribonucleoprotein complex responsible for the synthesis of proteins in the cell. The protein is Large ribosomal subunit protein eL24 (RPL24) of Bos taurus (Bovine).